The following is a 142-amino-acid chain: Large ribosomal subunit protein uL11 (142 aa).

This sequence belongs to the universal ribosomal protein uL11 family. In terms of assembly, part of the ribosomal stalk of the 50S ribosomal subunit. Interacts with L10 and the large rRNA to form the base of the stalk. L10 forms an elongated spine to which L12 dimers bind in a sequential fashion forming a multimeric L10(L12)X complex. One or more lysine residues are methylated.

Functionally, forms part of the ribosomal stalk which helps the ribosome interact with GTP-bound translation factors. The chain is Large ribosomal subunit protein uL11 from Brucella abortus (strain S19).